We begin with the raw amino-acid sequence, 388 residues long: Protein-glutamate methylesterase/protein-glutamine glutaminase (388 aa).

Residues 20–138 enclose the Response regulatory domain; that stretch reads RVMVVDDSVV…ESAGAEVFRH (119 aa). Asp71 carries the 4-aspartylphosphate modification. In terms of domain architecture, CheB-type methylesterase spans 193-386; the sequence is PTAPRVLLIG…PKLVRLFSGD (194 aa). Active-site residues include Ser204, His232, and Asp328.

It belongs to the CheB family. In terms of processing, phosphorylated by CheA. Phosphorylation of the N-terminal regulatory domain activates the methylesterase activity.

The protein resides in the cytoplasm. The catalysed reaction is [protein]-L-glutamate 5-O-methyl ester + H2O = L-glutamyl-[protein] + methanol + H(+). It carries out the reaction L-glutaminyl-[protein] + H2O = L-glutamyl-[protein] + NH4(+). Its function is as follows. Involved in chemotaxis. Part of a chemotaxis signal transduction system that modulates chemotaxis in response to various stimuli. Catalyzes the demethylation of specific methylglutamate residues introduced into the chemoreceptors (methyl-accepting chemotaxis proteins or MCP) by CheR. Also mediates the irreversible deamidation of specific glutamine residues to glutamic acid. This Rhodopseudomonas palustris (strain HaA2) protein is Protein-glutamate methylesterase/protein-glutamine glutaminase.